The chain runs to 306 residues: Probable C-terminal domain small phosphatase (306 aa).

Over residues 1 to 36 (MNSSPITQVSNPNDSLNHSSTNLIPSSHNSLNNYPQ) the composition is skewed to polar residues. Disordered regions lie at residues 1–45 (MNSS…NRKK) and 61–116 (NDQN…NKDS). The span at 61-111 (NDQNNGNNINTDNGASNNDKLQQQKQYNQQQQQQYNQHQQQQQQQQQQQQY) shows a compositional bias: low complexity. The FCP1 homology domain maps to 132-290 (RHVGLKTLVL…LDLLPLLDDL (159 aa)). The active-site 4-aspartylphosphate intermediate is D142. Residues D142, D144, and N253 each contribute to the Mg(2+) site. The Proton donor role is filled by D144.

In terms of assembly, monomer. Mg(2+) serves as cofactor.

Its subcellular location is the nucleus. The catalysed reaction is O-phospho-L-seryl-[protein] + H2O = L-seryl-[protein] + phosphate. The enzyme catalyses O-phospho-L-threonyl-[protein] + H2O = L-threonyl-[protein] + phosphate. In terms of biological role, may function as a phosphatase involved in the regulation of cell growth and differentiation. The chain is Probable C-terminal domain small phosphatase (fcpA) from Dictyostelium discoideum (Social amoeba).